The primary structure comprises 53 residues: Light-harvesting protein B-808/866 beta chain (53 aa).

At M1 the chain carries N-formylmethionine. Residues 1–25 (MRDDDDLVPPKWRPLFNNQDWLLHD) lie on the Cytoplasmic side of the membrane. A bacteriochlorophyll contacts are provided by H24 and H42. Residues 26-48 (IVVKSFYGFGVIAAIAHLLVYLW) form a helical membrane-spanning segment. The Periplasmic portion of the chain corresponds to 49-53 (KPWLP).

This sequence belongs to the antenna complex beta subunit family. In terms of assembly, the core complex is formed by different alpha and beta chains, binding bacteriochlorophyll molecules, and arranged most probably in tetrameric structures disposed around the reaction center. The non-pigmented gamma chains may constitute additional components.

The protein localises to the cell membrane. Antenna complexes are light-harvesting systems, which transfer the excitation energy to the reaction centers. The sequence is that of Light-harvesting protein B-808/866 beta chain (puf2B) from Chloroflexus aurantiacus (strain ATCC 29366 / DSM 635 / J-10-fl).